The following is a 264-amino-acid chain: Small ribosomal subunit protein eS1 (264 aa).

At Lys34 the chain carries N6-acetyllysine; alternate. Lys34 participates in a covalent cross-link: Glycyl lysine isopeptide (Lys-Gly) (interchain with G-Cter in SUMO2); alternate. At Lys56 the chain carries N6-acetyllysine. Tyr155 carries the post-translational modification ADP-ribosyltyrosine. Residues 232–264 are disordered; that stretch reads HGEGGSSGKTTGDETGAKVERADGYEPPVQESV. Ser237 carries the post-translational modification Phosphoserine. Positions 242–255 are enriched in basic and acidic residues; it reads TGDETGAKVERADG. Position 249 is an N6-acetyllysine; alternate (Lys249). Lys249 is covalently cross-linked (Glycyl lysine isopeptide (Lys-Gly) (interchain with G-Cter in SUMO2); alternate). Residue Tyr256 is modified to Phosphotyrosine. Phosphoserine is present on Ser263.

It belongs to the eukaryotic ribosomal protein eS1 family. In terms of assembly, component of the small ribosomal subunit. Mature ribosomes consist of a small (40S) and a large (60S) subunit. The 40S subunit contains about 33 different proteins and 1 molecule of RNA (18S). The 60S subunit contains about 49 different proteins and 3 molecules of RNA (28S, 5.8S and 5S). Identified in a IGF2BP1-dependent mRNP granule complex containing untranslated mRNAs. Binds with high affinity to IPO4. Interacts with DDIT3. Part of the small subunit (SSU) processome, composed of more than 70 proteins and the RNA chaperone small nucleolar RNA (snoRNA) U3. In terms of processing, the protein designated S3b has the same amino acid sequence as S3a except that it lacks the C-terminal 12 residues. It is probable that S3a is converted by proteolysis, either physiologically or fortuitously, to S3b. Post-translationally, ADP-ribosylated at Tyr-155 by PARP1 in presence of HPF1.

The protein resides in the cytoplasm. It localises to the nucleus. Its subcellular location is the nucleolus. In terms of biological role, component of the small ribosomal subunit. The ribosome is a large ribonucleoprotein complex responsible for the synthesis of proteins in the cell. Part of the small subunit (SSU) processome, first precursor of the small eukaryotic ribosomal subunit. During the assembly of the SSU processome in the nucleolus, many ribosome biogenesis factors, an RNA chaperone and ribosomal proteins associate with the nascent pre-rRNA and work in concert to generate RNA folding, modifications, rearrangements and cleavage as well as targeted degradation of pre-ribosomal RNA by the RNA exosome. May play a role during erythropoiesis through regulation of transcription factor DDIT3. In Rattus norvegicus (Rat), this protein is Small ribosomal subunit protein eS1 (Rps3a).